The primary structure comprises 1446 residues: Centrosomal protein of 164 kDa (1446 aa).

The segment at 1–195 (MARRPILLGD…PPQGLKAAAC (195 aa)) is interaction with ATRIP. The WW domain maps to 56-89 (APLPKGWKPCQNITGDLYYFNFDTGQSIWDHPCD). 2 disordered regions span residues 106–132 (PGAI…SKSP) and 159–185 (PPSA…EPTL). Residues 109–121 (IKKKDKKKKKEKK) show a composition bias toward basic residues. The span at 164-176 (RGSQSVSLGSSAD) shows a compositional bias: polar residues. Position 202 is a phosphoserine (S202). 4 disordered regions span residues 217–238 (EETN…SSEL), 250–408 (GGNF…SFLG), 424–570 (GDTL…EPAA), and 830–849 (KRQE…KEEH). A compositionally biased stretch (acidic residues) spans 218–228 (ETNEEDEEESD). Residues 257 to 277 (ESPRTSQPDKKDVSLDSDADR) are compositionally biased toward basic and acidic residues. Positions 288 to 312 (GADSSVASANGSKSQGRGASPWNPQ) are enriched in polar residues. 2 stretches are compositionally biased toward basic and acidic residues: residues 355–372 (KEGE…KEAS) and 384–397 (SEIH…RHSG). Positions 451–461 (SSIAEPQSKHT) are enriched in polar residues. Composition is skewed to basic and acidic residues over residues 490–499 (PEWKEAEGPG) and 525–534 (ERAEEKHSQA). Positions 1143-1197 (EVLGNMRKNLNEETRHLDEMKSAMRKGHDLLKKKEEKLIQLESSLQEEVSDEDTL) form a coiled coil. The tract at residues 1261–1287 (LGSLNSQPPPQGLGSQPPPPLFTSSLR) is disordered. Positions 1267–1281 (QPPPQGLGSQPPPPL) are enriched in pro residues. Residues S1369 and S1371 each carry the phosphoserine modification.

As to quaternary structure, interacts (via N-terminus) with ATRIP. Interacts with ATM, ATR and MDC1. Interacts with XPA (via N-terminus) upon UV irradiation. Interacts with CEP83, CCDC92, TTBK2, DVL3, NPHP3 and weakly with NPHP4. Interacts with DZIP1.

The protein localises to the cytoplasm. Its subcellular location is the cytoskeleton. The protein resides in the microtubule organizing center. It is found in the centrosome. It localises to the centriole. The protein localises to the nucleus. Its function is as follows. Plays a role in microtubule organization and/or maintenance for the formation of primary cilia (PC), a microtubule-based structure that protrudes from the surface of epithelial cells. Plays a critical role in G2/M checkpoint and nuclear divisions. A key player in the DNA damage-activated ATR/ATM signaling cascade since it is required for the proper phosphorylation of H2AX, RPA, CHEK2 and CHEK1. Plays a critical role in chromosome segregation, acting as a mediator required for the maintenance of genomic stability through modulation of MDC1, RPA and CHEK1. In Mus musculus (Mouse), this protein is Centrosomal protein of 164 kDa.